The following is a 382-amino-acid chain: Lipid-A-disaccharide synthase (382 aa).

Belongs to the LpxB family.

The catalysed reaction is a lipid X + a UDP-2-N,3-O-bis[(3R)-3-hydroxyacyl]-alpha-D-glucosamine = a lipid A disaccharide + UDP + H(+). Its pathway is bacterial outer membrane biogenesis; LPS lipid A biosynthesis. In terms of biological role, condensation of UDP-2,3-diacylglucosamine and 2,3-diacylglucosamine-1-phosphate to form lipid A disaccharide, a precursor of lipid A, a phosphorylated glycolipid that anchors the lipopolysaccharide to the outer membrane of the cell. This chain is Lipid-A-disaccharide synthase, found in Alteromonas mediterranea (strain DSM 17117 / CIP 110805 / LMG 28347 / Deep ecotype).